The primary structure comprises 344 residues: Heat-inducible transcription repressor HrcA (344 aa).

Belongs to the HrcA family.

In terms of biological role, negative regulator of class I heat shock genes (grpE-dnaK-dnaJ and groELS operons). Prevents heat-shock induction of these operons. This is Heat-inducible transcription repressor HrcA from Streptococcus equi subsp. zooepidemicus (strain MGCS10565).